The primary structure comprises 75 residues: Small ribosomal subunit protein bS18 (75 aa).

This sequence belongs to the bacterial ribosomal protein bS18 family. Part of the 30S ribosomal subunit. Forms a tight heterodimer with protein bS6.

Functionally, binds as a heterodimer with protein bS6 to the central domain of the 16S rRNA, where it helps stabilize the platform of the 30S subunit. In Rhodobacter capsulatus (strain ATCC BAA-309 / NBRC 16581 / SB1003), this protein is Small ribosomal subunit protein bS18 (rbsR).